The sequence spans 292 residues: MENNHNNFSNLITILQEYWTEQECAIFQPLDLPIGAGTFHNTTFFGTIGPEPIRAAYIQSCRRPTDGRYGKNPNRLQHYYQFQVIIKPPLKNIQNIYLKSLNLLKISEKRNDIRFVEDNWENPTLGAWGIGWEVWLNGMEITQFTYFQQVGGLECNPVTVEITYGLERIAMHMQNQSNVYDLIWSENKFKKITYGDIFQQNEIEQSKYNFEYSDINLLFEYFQKYIFEAKKLIELKKPLLLVSYEKILQASHVFNLLDARKAISSSERQNYILKIRKLAKKIAQEYLYSRKK.

Belongs to the class-II aminoacyl-tRNA synthetase family. As to quaternary structure, tetramer of two alpha and two beta subunits.

Its subcellular location is the cytoplasm. It carries out the reaction tRNA(Gly) + glycine + ATP = glycyl-tRNA(Gly) + AMP + diphosphate. In Buchnera aphidicola subsp. Schizaphis graminum (strain Sg), this protein is Glycine--tRNA ligase alpha subunit.